Consider the following 82-residue polypeptide: Small ribosomal subunit protein bS16 (82 aa).

Belongs to the bacterial ribosomal protein bS16 family.

This Methylobacillus flagellatus (strain ATCC 51484 / DSM 6875 / VKM B-1610 / KT) protein is Small ribosomal subunit protein bS16.